The following is a 262-amino-acid chain: MDKRWSLQGMNALVTGGTKGIGEAVVEELSILGARVHTCARDETQLQERLREWQEKGFQVTTSICDVSLREQREKLMETVSSLFQGKLNILVNNVGTLMLKPTTEYTAEEFSFLMATNLDSAFHISQLAHPLLKASGSGSIVLMSSIAGVVHVGVGSIYGATKGAMNQLARNLACEWASDNIRTNAICPWLITTPLISDLLSVEEMKKEAEERTPMGRVGEANEVSPLVAFLCLPAASYITGQVICVDGGLTVNGFSYQPHA.

13–37 (LVTGGTKGIGEAVVEELSILGARVH) contacts NADP(+). Serine 146 contacts substrate. Residue tyrosine 159 is the Proton acceptor of the active site.

The protein belongs to the short-chain dehydrogenases/reductases (SDR) family. SDR65C subfamily.

This is Tropinone reductase homolog At2g29290 from Arabidopsis thaliana (Mouse-ear cress).